The sequence spans 242 residues: MILLIDAGNTRLKWRLAGTGGPLEGAGVMADAEPLIGLSGYWSDIDRILVSTVASESARAQLHELLLAGAKVPVEYCWAESTRDGLSNSYGDVSRMGADRWHAMLAGWVRCKASFAVVDAGSAVTVDYVNAGGRHLGGYILPGLQMMRRSLKVDAARIGFEQSEQLDTRPGQSTGECVNHGLAWLTEALVQRIHRDAKAFGLSAIYLTGGDARRLQALGLEANVVEGMVLDGLERIASAGVL.

6–13 (DAGNTRLK) contributes to the ATP binding site. Substrate contacts are provided by residues Tyr-90 and 97-100 (GADR). Asp-99 functions as the Proton acceptor in the catalytic mechanism. Asp-119 is a K(+) binding site. Residue Ser-122 coordinates ATP. Thr-174 is a substrate binding site.

Belongs to the type III pantothenate kinase family. Homodimer. It depends on NH4(+) as a cofactor. Requires K(+) as cofactor.

The protein resides in the cytoplasm. The catalysed reaction is (R)-pantothenate + ATP = (R)-4'-phosphopantothenate + ADP + H(+). It participates in cofactor biosynthesis; coenzyme A biosynthesis; CoA from (R)-pantothenate: step 1/5. Its function is as follows. Catalyzes the phosphorylation of pantothenate (Pan), the first step in CoA biosynthesis. In Marinobacter nauticus (strain ATCC 700491 / DSM 11845 / VT8) (Marinobacter aquaeolei), this protein is Type III pantothenate kinase.